Here is a 68-residue protein sequence, read N- to C-terminus: Protein ShdD (68 aa).

Involved in the non-oxidative decarboxylation and detoxification of phenolic derivatives under anaerobic conditions, however the precise biochemical function of ShdD in metabolism of phenolic acid is unknown. This is Protein ShdD from Sedimentibacter hydroxybenzoicus (Clostridium hydroxybenzoicum).